The primary structure comprises 506 residues: Tubby protein homolog (506 aa).

Residues 36-244 form a disordered region; it reads QKQKKKRQEP…PSPTAPEQPV (209 aa). Composition is skewed to low complexity over residues 70 to 87 and 101 to 116; these read LVESYLSSSGSTSYQVQE and PTAPASAKRTKAAATA. The segment covering 196-206 has biased composition (acidic residues); it reads FDEDEEDEEEN. Composition is skewed to low complexity over residues 207–221 and 230–243; these read SSSSSQLNSNTRPSS and EAASAPSPTAPEQP.

This sequence belongs to the TUB family. As to quaternary structure, interacts with GNAQ. Interacts with TULP1.

It is found in the cytoplasm. Its subcellular location is the nucleus. The protein localises to the secreted. It localises to the cell membrane. Functionally, functions in signal transduction from heterotrimeric G protein-coupled receptors. Binds to membranes containing phosphatidylinositol 4,5-bisphosphate. Can bind DNA (in vitro). May contribute to the regulation of transcription in the nucleus. Could be involved in the hypothalamic regulation of body weight. Contribute to stimulation of phagocytosis of apoptotic retinal pigment epithelium (RPE) cells and macrophages. The polypeptide is Tubby protein homolog (TUB) (Homo sapiens (Human)).